The primary structure comprises 523 residues: 2-isopropylmalate synthase (523 aa).

The 263-residue stretch at 5-267 (VIIFDTTLRD…HTNINHHEIW (263 aa)) folds into the Pyruvate carboxyltransferase domain. Asp-14, His-202, His-204, and Asn-238 together coordinate Mn(2+). The interval 392–523 (RLDYFNVQSG…QNKENNKETV (132 aa)) is regulatory domain.

Belongs to the alpha-IPM synthase/homocitrate synthase family. LeuA type 1 subfamily. Homodimer. The cofactor is Mn(2+).

The protein localises to the cytoplasm. It carries out the reaction 3-methyl-2-oxobutanoate + acetyl-CoA + H2O = (2S)-2-isopropylmalate + CoA + H(+). Its pathway is amino-acid biosynthesis; L-leucine biosynthesis; L-leucine from 3-methyl-2-oxobutanoate: step 1/4. Its function is as follows. Catalyzes the condensation of the acetyl group of acetyl-CoA with 3-methyl-2-oxobutanoate (2-ketoisovalerate) to form 3-carboxy-3-hydroxy-4-methylpentanoate (2-isopropylmalate). The protein is 2-isopropylmalate synthase of Klebsiella pneumoniae subsp. pneumoniae (strain ATCC 700721 / MGH 78578).